The chain runs to 513 residues: MQLNSTEISDLIKQRIEQFEVVSETRNEGTIVAVSDGIIRIHGLADVMQGEMIELPGNRFAIALNLERDSVGAVVMGPYASLAEGDKVKTTGRILEVPVGNGLLGRVVNTLGEPIDGKGPIEHDGFSPVEVIAPGVIERKSVDQPVQTGYKAVDSMIPIGRGQRELIIGDRQIGKTALAIDAIINQKDSGIKCVYVAVGQKASTIANVVRKLDEHGALANTIVVVATASEAAALQYLAPYSGCSMGEYFRDRGEDSLIVYDDLSKQAVAYRQISLLLKRPPGREAYPGDVFYLHSRLLERASRVNAEYVEKFTKGEVKGRTGSLTALPIIETQAGDVSAFVPTNVISITDGQIFLETDLFNSGLRPAVNPGISVSRVGGAAQTKIIKKLSGGIRTALAQYRELAAFSQFASDLDDATRAQLEHGERVTELMKQKQYAPMSIADQSVSLFAAEKGYLKSIELAKIGDFEASLLSFMNSEHAELMKTINDTGSYNADIEGELKASLDKFVETQTW.

169 to 176 serves as a coordination point for ATP; sequence GDRQIGKT.

It belongs to the ATPase alpha/beta chains family. In terms of assembly, F-type ATPases have 2 components, CF(1) - the catalytic core - and CF(0) - the membrane proton channel. CF(1) has five subunits: alpha(3), beta(3), gamma(1), delta(1), epsilon(1). CF(0) has three main subunits: a(1), b(2) and c(9-12). The alpha and beta chains form an alternating ring which encloses part of the gamma chain. CF(1) is attached to CF(0) by a central stalk formed by the gamma and epsilon chains, while a peripheral stalk is formed by the delta and b chains.

It localises to the cell inner membrane. It catalyses the reaction ATP + H2O + 4 H(+)(in) = ADP + phosphate + 5 H(+)(out). In terms of biological role, produces ATP from ADP in the presence of a proton gradient across the membrane. The alpha chain is a regulatory subunit. The polypeptide is ATP synthase subunit alpha (Shewanella sediminis (strain HAW-EB3)).